A 358-amino-acid polypeptide reads, in one-letter code: Peptide chain release factor 1 (358 aa).

Position 233 is an N5-methylglutamine (Gln233). The interval 286–309 (AELASARKSQVGTGDRSERIRTYN) is disordered.

This sequence belongs to the prokaryotic/mitochondrial release factor family. Post-translationally, methylated by PrmC. Methylation increases the termination efficiency of RF1.

The protein resides in the cytoplasm. In terms of biological role, peptide chain release factor 1 directs the termination of translation in response to the peptide chain termination codons UAG and UAA. The polypeptide is Peptide chain release factor 1 (Carboxydothermus hydrogenoformans (strain ATCC BAA-161 / DSM 6008 / Z-2901)).